Reading from the N-terminus, the 1680-residue chain is RAF-like serine/threonine-protein kinase PRAF (1680 aa).

A disordered region spans residues F86–P163. One can recognise a PB1 domain in the interval R166–A267. Disordered regions lie at residues L363–A388, P417–Q516, P556–Q580, G594–F613, Q641–Q672, R700–Q725, and L1186–Q1226. Positions N366 to A388 are enriched in low complexity. Basic and acidic residues predominate over residues H446–R482. Composition is skewed to low complexity over residues Q560–Q580 and Q603–F613. A compositionally biased stretch (polar residues) spans Q641–S651. Over residues S1204–S1217 the composition is skewed to low complexity. S1248 bears the Phosphoserine mark. Residues A1339 to L1354 are compositionally biased toward basic and acidic residues. The tract at residues A1339 to P1372 is disordered. Residue S1365 is modified to Phosphoserine. Positions L1389–M1655 constitute a Protein kinase domain. Residues L1395–V1403 and K1416 each bind ATP. D1518 serves as the catalytic Proton acceptor. The tract at residues P1661 to V1680 is disordered.

It belongs to the protein kinase superfamily. Ser/Thr protein kinase family. Hyperphosphorylated in response to auxin. Its phosphorylation state is also rapidly stimulated by photosynthetic activity (e.g. in response to blue light and red light irradiation); dephosphorylated in the darkness.

The protein resides in the cytoplasm. It carries out the reaction L-seryl-[protein] + ATP = O-phospho-L-seryl-[protein] + ADP + H(+). The enzyme catalyses L-threonyl-[protein] + ATP = O-phospho-L-threonyl-[protein] + ADP + H(+). Its activity is regulated as follows. Activated by auxin via rapid phosphorylation. Regulated by photosynthesis-activity-dependent changes in its phosphorylation status. Functionally, RAF-like protein kinase acting as a central mediator of a fast response pathway to auxin involving proteins phosphorylation, and leading to rapid cellular responses including membrane depolarization and cytoplasmic streaming. Required for general growth and developmental process. Photosynthesis signaling kinase involved in the regulation of the sucrose metabolism involving PGM1. Necessary for optimal chloroplast electron transport rate (ETR). The protein is RAF-like serine/threonine-protein kinase PRAF of Marchantia polymorpha (Common liverwort).